A 310-amino-acid polypeptide reads, in one-letter code: Acetyl-coenzyme A carboxylase carboxyl transferase subunit beta (310 aa).

Positions 27–296 constitute a CoA carboxyltransferase N-terminal domain; the sequence is LWKKCPKCSA…PEFENEEELE (270 aa). Cys-31, Cys-34, Cys-50, and Cys-53 together coordinate Zn(2+). The C4-type zinc finger occupies 31–53; that stretch reads CPKCSAVLYRPELEKNLDVCPKC. The tract at residues 285-310 is disordered; that stretch reads PEPEFENEEELEEEEMERPEPPDNVE. A compositionally biased stretch (acidic residues) spans 287-310; it reads PEFENEEELEEEEMERPEPPDNVE.

The protein belongs to the AccD/PCCB family. In terms of assembly, acetyl-CoA carboxylase is a heterohexamer composed of biotin carboxyl carrier protein (AccB), biotin carboxylase (AccC) and two subunits each of ACCase subunit alpha (AccA) and ACCase subunit beta (AccD). The cofactor is Zn(2+).

It is found in the cytoplasm. It catalyses the reaction N(6)-carboxybiotinyl-L-lysyl-[protein] + acetyl-CoA = N(6)-biotinyl-L-lysyl-[protein] + malonyl-CoA. It participates in lipid metabolism; malonyl-CoA biosynthesis; malonyl-CoA from acetyl-CoA: step 1/1. Component of the acetyl coenzyme A carboxylase (ACC) complex. Biotin carboxylase (BC) catalyzes the carboxylation of biotin on its carrier protein (BCCP) and then the CO(2) group is transferred by the transcarboxylase to acetyl-CoA to form malonyl-CoA. The sequence is that of Acetyl-coenzyme A carboxylase carboxyl transferase subunit beta from Hahella chejuensis (strain KCTC 2396).